The sequence spans 842 residues: Outer membrane usher protein AggC (842 aa).

The signal sequence occupies residues 1-21 (MKTSSFIIVILLCFRIENVIA). Residues Cys-819 and Cys-841 are joined by a disulfide bond.

Belongs to the fimbrial export usher family.

It is found in the cell outer membrane. Functionally, involved in the export and assembly of the AAF/I fimbriae subunits across the outer membrane. This is Outer membrane usher protein AggC (aggC) from Escherichia coli.